The sequence spans 131 residues: Small ribosomal subunit protein eS8 (131 aa).

The tract at residues 1-42 (MKLGAYYKGGDLKKPSGGKKRKVRKTKKKALGGGPPQIPKLG) is disordered. Positions 16–30 (SGGKKRKVRKTKKKA) are enriched in basic residues.

This sequence belongs to the eukaryotic ribosomal protein eS8 family. In terms of assembly, part of the 30S ribosomal subunit.

This Pyrobaculum aerophilum (strain ATCC 51768 / DSM 7523 / JCM 9630 / CIP 104966 / NBRC 100827 / IM2) protein is Small ribosomal subunit protein eS8.